Here is a 392-residue protein sequence, read N- to C-terminus: uncharacterized protein (392 aa).

Belongs to the glycosyltransferase group 1 family. Glycosyltransferase 4 subfamily.

This is an uncharacterized protein from Methanocaldococcus jannaschii (strain ATCC 43067 / DSM 2661 / JAL-1 / JCM 10045 / NBRC 100440) (Methanococcus jannaschii).